An 83-amino-acid chain; its full sequence is Alpha-toxin CvIV4 (83 aa).

Residues 1 to 19 form the signal peptide; the sequence is MNYFILILVAALLILDVNC. The 59-residue stretch at 21–79 folds into the LCN-type CS-alpha/beta domain; it reads KDGYPVEHSGCKYTCWKNEYCDKVCKDLKGEGGYCYINLTCWCTGLPDNVPLKTNQRCN. 4 cysteine pairs are disulfide-bonded: C31–C78, C35–C55, C41–C61, and C45–C63.

The protein belongs to the long (4 C-C) scorpion toxin superfamily. Sodium channel inhibitor family. In terms of tissue distribution, expressed by the venom gland.

The protein resides in the secreted. This toxin significantly slows the fast inactivation of Nav1.2/SCN2A (EC(50)=580 nM), Nav1.3/SCN3A (EC(50)=1310 nM), Nav1.4/SCN4A (EC(50)=530 nM), and Nav1.7/SCN9A (EC(50)=1340 nM). The toxin does not affect the peak amplitude of Nav1.7 currents. On all channels cited above, the toxin requires depolarizing potentials to slow channel inactivation. In addition, the toxin has no or very weak effects on the voltage-dependence of steady-state inactivation, and on voltage-dependence of activation. In vivo, it produces paw licking in mice equivalent to the effects of whole venom. The polypeptide is Alpha-toxin CvIV4 (Centruroides vittatus (Striped bark scorpion)).